The chain runs to 47 residues: Large ribosomal subunit protein bL36A (47 aa).

This sequence belongs to the bacterial ribosomal protein bL36 family.

The polypeptide is Large ribosomal subunit protein bL36A (Yersinia enterocolitica serotype O:8 / biotype 1B (strain NCTC 13174 / 8081)).